A 1371-amino-acid chain; its full sequence is DNA-directed RNA polymerase subunit beta (1371 aa).

It belongs to the RNA polymerase beta chain family. In terms of assembly, the RNAP catalytic core consists of 2 alpha, 1 beta, 1 beta' and 1 omega subunit. When a sigma factor is associated with the core the holoenzyme is formed, which can initiate transcription.

It catalyses the reaction RNA(n) + a ribonucleoside 5'-triphosphate = RNA(n+1) + diphosphate. Its function is as follows. DNA-dependent RNA polymerase catalyzes the transcription of DNA into RNA using the four ribonucleoside triphosphates as substrates. The chain is DNA-directed RNA polymerase subunit beta from Citrifermentans bemidjiense (strain ATCC BAA-1014 / DSM 16622 / JCM 12645 / Bem) (Geobacter bemidjiensis).